The chain runs to 335 residues: DNA-directed RNA polymerase subunit alpha (335 aa).

The interval 1 to 233 is alpha N-terminal domain (alpha-NTD); the sequence is MMLNATEFLT…QQISIFVDLE (233 aa). An alpha C-terminal domain (alpha-CTD) region spans residues 247–335; that stretch reads VDPVLLRPVD…VDDRFSYRSR (89 aa).

Belongs to the RNA polymerase alpha chain family. As to quaternary structure, homodimer. The RNAP catalytic core consists of 2 alpha, 1 beta, 1 beta' and 1 omega subunit. When a sigma factor is associated with the core the holoenzyme is formed, which can initiate transcription.

It carries out the reaction RNA(n) + a ribonucleoside 5'-triphosphate = RNA(n+1) + diphosphate. Its function is as follows. DNA-dependent RNA polymerase catalyzes the transcription of DNA into RNA using the four ribonucleoside triphosphates as substrates. The protein is DNA-directed RNA polymerase subunit alpha of Psychrobacter sp. (strain PRwf-1).